Here is a 344-residue protein sequence, read N- to C-terminus: Cell adhesion molecule CEACAM6 (344 aa).

Positions methionine 1–alanine 34 are cleaved as a signal peptide. The Ig-like V-type domain maps to lysine 35–proline 142. 12 N-linked (GlcNAc...) asparagine glycosylation sites follow: asparagine 104, asparagine 111, asparagine 115, asparagine 152, asparagine 173, asparagine 197, asparagine 224, asparagine 256, asparagine 274, asparagine 288, asparagine 292, and asparagine 309. Ig-like C2-type domains are found at residues proline 145–asparagine 232 and proline 240–threonine 314. Cysteine 167 and cysteine 215 are disulfide-bonded. Cysteine 259 and cysteine 299 are disulfide-bonded. Glycine 320 carries GPI-anchor amidated glycine lipidation. The propeptide at serine 321–isoleucine 344 is removed in mature form.

The protein belongs to the immunoglobulin superfamily. CEA family. Homodimer; homodimerizes via its Ig-like V-type domain. Heterodimer with CEACAM8; heterodimerizes via its Ig-like V-type domain. In terms of processing, glycosylated. Expressed in neutrophils. Expressed in columnar epithelial and goblet cells of the colon. Expressed in numerous tumor cell lines (at protein level).

The protein localises to the cell membrane. It localises to the apical cell membrane. The protein resides in the cell surface. Functionally, cell surface glycoprotein that plays a role in cell adhesion and tumor progression. Intercellular adhesion occurs in a calcium- and fibronectin-independent manner. Mediates homophilic and heterophilic cell adhesion with other carcinoembryonic antigen-related cell adhesion molecules, such as CEACAM5 and CEACAM8. Heterophilic interaction with CEACAM8 occurs in activated neutrophils. Plays a role in neutrophil adhesion to cytokine-activated endothelial cells. Plays a role in cell migration and cell adhesion to endothelial cells. The chain is Cell adhesion molecule CEACAM6 from Homo sapiens (Human).